We begin with the raw amino-acid sequence, 282 residues long: Putative hydrolase Bcep18194_B0137 (282 aa).

Glu124, Glu126, and Asp155 together coordinate Mg(2+).

Belongs to the FAH family. Requires Mg(2+) as cofactor.

The chain is Putative hydrolase Bcep18194_B0137 from Burkholderia lata (strain ATCC 17760 / DSM 23089 / LMG 22485 / NCIMB 9086 / R18194 / 383).